Consider the following 305-residue polypeptide: uncharacterized protein (305 aa).

Positions 5–233 (LELKNVTKNI…ENDTYFFQVE (229 aa)) constitute an ABC transporter domain. Position 37–44 (37–44 (GPNGAGKT)) interacts with ATP.

Belongs to the ABC transporter superfamily.

This is an uncharacterized protein from Bacillus subtilis (strain 168).